Reading from the N-terminus, the 424-residue chain is MSLHLLLAVSLCVALASSLPWAAASANGNGNGKPLVAAITKDAATSLYTVPIKDGRPLVLDLAGALVWMSCAAAHPTLECHHHFCMHAHSYHPPGCPHNGYGRADVEDPFRCKCTAHPYNPFSGESATADLTRTRLSANATDGKNPLYPVSFAAVTSCAPDSLLAKLPAGAVGVAGLARTRLALQAQVARSQKVANKFALCLPSGGGGDGVAIFGGGPLFLLPPGRPDVAATLAGETPLHRNKDLPGYFISATKIAVNQEQVQLYTQEPLVVELCTRIPYTALRPDVYRAVVDAFARATAGRKRVTPPPPPAAPFELCYDSRDLGSTRLGYAVPQIDLVLEGGKNWTVFGGNSMAQVSDNTACLAVVKVKGEKGSPPPPAAIIGGFQMENNLVVFDEEKQRLGFSGLLWGRQTTCSNFNFTLAA.

An N-terminal signal peptide occupies residues 1-18; the sequence is MSLHLLLAVSLCVALASS. The Peptidase A1 domain occupies 43–405; it reads AATSLYTVPI…DEEKQRLGFS (363 aa). N-linked (GlcNAc...) asparagine glycans are attached at residues Asn139, Asn345, and Asn419.

It belongs to the peptidase A1 family. As to expression, expressed in roots. Expressed at low levels in leaf sheaths, stems and flowers.

It is found in the secreted. It localises to the extracellular space. The protein localises to the apoplast. The catalysed reaction is Random endo-hydrolysis of N-acetyl-beta-D-glucosaminide (1-&gt;4)-beta-linkages in chitin and chitodextrins.. Chitinase that possesses antifungal activity. Inhibits the growth of the fungal pathogen Rhizoctonia solani by degrading the fungal cell wall. Does not possess inhibiting activity against fungal endo-1,4-beta-D-xylanases belonging to glycoside hydrolase family 10 (GH10) and family 11 (GH11). Involved in the regulation of plant growth by regulating the intracellular calcium ion concentration in roots. This Oryza sativa subsp. japonica (Rice) protein is Chitinase CLP.